The primary structure comprises 186 residues: UPF0301 protein HI_0304 (186 aa).

It belongs to the UPF0301 (AlgH) family.

This Haemophilus influenzae (strain ATCC 51907 / DSM 11121 / KW20 / Rd) protein is UPF0301 protein HI_0304.